The sequence spans 297 residues: B-lymphocyte antigen CD20 (297 aa).

Residues 1 to 51 lie on the Cytoplasmic side of the membrane; sequence MTTPRNSMSGTLPVDPMKSPTAMYPVQKIIPKRMPSVVGPTQNFFMRESKT. The residue at position 36 (serine 36) is a Phosphoserine. Residues 52-72 traverse the membrane as a helical segment; it reads LGAVQIMNGLFHIALGSLLMI. Over 73-75 the chain is Extracellular; it reads HTD. Residues 76–96 form a helical membrane-spanning segment; the sequence is VCAPICITMWYPLWGGIMFII. Topologically, residues 97-122 are cytoplasmic; that stretch reads SGSLLAAADKNPRKSLVKGKMIMNSL. The helical transmembrane segment at 123–143 threads the bilayer; sequence SLFAAISGIIFLIMDIFNITI. Topologically, residues 144 to 188 are extracellular; that stretch reads SHFFKMENLNLIKAPMPYVDIHNCDPANPSEKNSLSIQYCGSIRS. Residues 189 to 209 traverse the membrane as a helical segment; the sequence is VFLGVFAVMLIFAFFQKLVTA. The Cytoplasmic portion of the chain corresponds to 210 to 297; sequence GIVENEWKKL…SSPIENDSIP (88 aa). Cysteine 220 carries S-palmitoyl cysteine lipidation. Phosphoserine is present on serine 225. The tract at residues 274-297 is disordered; it reads ELEINFAEPPQEQESSPIENDSIP. Low complexity predominate over residues 281–290; the sequence is EPPQEQESSP.

The protein belongs to the MS4A family. Forms homotetramers. Interacts with the heavy and light chains of cell surface IgM, the antigen-binding components of the BCR. In terms of processing, phosphorylated. Might be functionally regulated by protein kinase(s). In terms of tissue distribution, expressed in PBMCs and lymph node from healthy dogs, in B-cells of canine lymphoma, but not in T-cell lymphoma cells and non-T and non-B-cell lymphoma cells.

The protein localises to the cell membrane. In terms of biological role, B-lymphocyte-specific membrane protein that plays a role in the regulation of cellular calcium influx necessary for the development, differentiation, and activation of B-lymphocytes. Functions as a store-operated calcium (SOC) channel component promoting calcium influx after activation by the B-cell receptor/BCR. In Canis lupus familiaris (Dog), this protein is B-lymphocyte antigen CD20 (MS4A1).